The chain runs to 165 residues: Plastocyanin, chloroplastic (165 aa).

A chloroplast-targeting transit peptide spans 1–66 (MATVTSSAAV…AGILAGNAMA (66 aa)). Residues 67-165 (AEVLLGSSDG…AGMVGKVTVN (99 aa)) enclose the Plastocyanin-like domain. 4 residues coordinate Cu cation: His103, Cys150, His153, and Met158.

Belongs to the plastocyanin family. It depends on Cu(2+) as a cofactor.

It is found in the plastid. The protein resides in the chloroplast thylakoid membrane. Its function is as follows. Participates in electron transfer between P700 and the cytochrome b6-f complex in photosystem I. The polypeptide is Plastocyanin, chloroplastic (PETE) (Silene latifolia subsp. alba (White campion)).